The primary structure comprises 289 residues: Probable aquaporin PIP-type 7a (289 aa).

Positions 1–39 (MEAKEQDVSLGANKFPERQPLGIAAQSQDEPKDYQEPPP) are disordered. Residues 1–57 (MEAKEQDVSLGANKFPERQPLGIAAQSQDEPKDYQEPPPAPLFEPSELTSWSFYRAG) are Cytoplasmic-facing. A helical membrane pass occupies residues 58-78 (IAEFIATFLFLYITVLTVMGV). Residues 79-91 (VRESSKCKTVGIQ) lie on the Extracellular side of the membrane. The chain crosses the membrane as a helical span at residues 92–112 (GIAWAFGGMIFALVYCTAGIS). Residues 113 to 135 (GGHINPAVTFGLFLARKLSLTRA) are Cytoplasmic-facing. The short motif at 117 to 119 (NPA) is the NPA 1 element. A helical membrane pass occupies residues 136–156 (IFYMVMQVLGAICGAGVVKGF). The Extracellular segment spans residues 157-178 (EGKQRFGDLNGGANFVAPGYTK). A helical transmembrane segment spans residues 179–199 (GDGLGAEIVGTFILVYTVFSA). Over 200–212 (TDAKRSARDSHVP) the chain is Cytoplasmic. A helical transmembrane segment spans residues 213–233 (ILAPLPIGFAVFLVHLATIPI). Residues 234-260 (TGTGINPARSLGAAIVFNKKIGWNDHW) lie on the Extracellular side of the membrane. The NPA 2 motif lies at 239-241 (NPA). A helical membrane pass occupies residues 261-281 (IFWVGPFIGAALAALYHQVVI). At 282 to 289 (RAIPFKSK) the chain is on the cytoplasmic side.

It belongs to the MIP/aquaporin (TC 1.A.8) family. PIP (TC 1.A.8.11) subfamily.

The protein localises to the cell membrane. In terms of biological role, aquaporins facilitate the transport of water and small neutral solutes across cell membranes. The sequence is that of Probable aquaporin PIP-type 7a (TRG-31) from Pisum sativum (Garden pea).